Here is a 489-residue protein sequence, read N- to C-terminus: Cytochrome P450 monooxygenase tazI (489 aa).

Cys433 is a heme binding site.

The protein belongs to the cytochrome P450 family. It depends on heme as a cofactor.

The protein operates within secondary metabolite biosynthesis. In terms of biological role, cytochrome P450 monooxygenase; part of the gene cluster that mediates the biosynthesis of azaterrilone A and other azaphilones, a class of fungal metabolites characterized by a highly oxygenated pyrano-quinone bicyclic core and exhibiting a broad range of bioactivities. The first step of the pathway begins with the non-reducing polyketide synthase tazA that assembles one acetyl-CoA starter unit, five malonyl-CoA units, and catalyzes a series of Claisen condensations, methylation, PT-mediated cyclization, and finally releases the first hexaketide precursor through the R-domain. The tazA product then undergoes reduction on its terminal ketone and the following pyran-ring formation by yet undetermined enzyme(s). Dehydration and enoyl reduction, possibly involving the trans-enoyl reductase tazE leads to the next intermediate. TazD is predicted as an acetyltransferase and might catalyze the acetylation steps leading to the synthesis of azaterrilone A. Azaterrilone A is not the final product of the taz pathway and both the highly reducing polyketide synthase tazB and the dual enzyme tazHJ catalyze late steps of the pathway, leading to the production of the 2 final stereoisomers that contain additional polyketide modification whose structures have still to be determined. The protein is Cytochrome P450 monooxygenase tazI of Aspergillus terreus (strain NIH 2624 / FGSC A1156).